The following is a 382-amino-acid chain: MSLDFLPFSRPSIGEDEIAAVEQVLRSGWITTGPKNQELEQRFAERLGCRHAVALSSATGALHVTLLALGIGPGDEVITPSLTWVSTANVITLLGATPVFVDVDRDTLMCSAQAVEAAIGPRTRAIVPVHYAGSTLDLEGLRTVAGRHGIALVEDAAHAVGSEYRGRPVGSRGTAIFSFHAIKNLTCAEGAMFVSDDSALAERVRRLKFHGLGVDAYDRLSHGRKPQAEVIEPGFKYNLADLNAALALVQLKRLDALNARRQALAERYLERLAGLPLAPLGLPAHKQRHAWHLFILRIDAEACGLGRDAFMEALKARGIGSGIHFIASHLHHYYRQRQPRLSLPNSEWNSARLCSIPLFPDMRDDDIERVARAIEDILEKRR.

K183 carries the N6-(pyridoxal phosphate)lysine modification.

The protein belongs to the DegT/DnrJ/EryC1 family. ArnB subfamily. Homodimer. Pyridoxal 5'-phosphate serves as cofactor.

The catalysed reaction is UDP-4-amino-4-deoxy-beta-L-arabinose + 2-oxoglutarate = UDP-beta-L-threo-pentopyranos-4-ulose + L-glutamate. Its pathway is nucleotide-sugar biosynthesis; UDP-4-deoxy-4-formamido-beta-L-arabinose biosynthesis; UDP-4-deoxy-4-formamido-beta-L-arabinose from UDP-alpha-D-glucuronate: step 2/3. It functions in the pathway bacterial outer membrane biogenesis; lipopolysaccharide biosynthesis. In terms of biological role, catalyzes the conversion of UDP-4-keto-arabinose (UDP-Ara4O) to UDP-4-amino-4-deoxy-L-arabinose (UDP-L-Ara4N). The modified arabinose is attached to lipid A and is required for resistance to polymyxin and cationic antimicrobial peptides. In Pseudomonas aeruginosa (strain UCBPP-PA14), this protein is UDP-4-amino-4-deoxy-L-arabinose--oxoglutarate aminotransferase.